Here is a 32-residue protein sequence, read N- to C-terminus: Photosystem II reaction center protein Z (32 aa).

A helical transmembrane segment spans residues 12 to 32; the sequence is IGSAAWAGLVLLVGTLNYLVI.

This sequence belongs to the PsbZ family. In terms of assembly, PSII is composed of 1 copy each of membrane proteins PsbA, PsbB, PsbC, PsbD, PsbE, PsbF, PsbH, PsbI, PsbJ, PsbK, PsbL, PsbM, PsbT, PsbY, PsbZ, Psb30/Ycf12, at least 3 peripheral proteins of the oxygen-evolving complex and a large number of cofactors. It forms dimeric complexes.

Its subcellular location is the plastid. The protein resides in the chloroplast thylakoid membrane. Functionally, may control the interaction of photosystem II (PSII) cores with the light-harvesting antenna, regulates electron flow through the 2 photosystem reaction centers. PSII is a light-driven water plastoquinone oxidoreductase, using light energy to abstract electrons from H(2)O, generating a proton gradient subsequently used for ATP formation. This chain is Photosystem II reaction center protein Z, found in Euglena anabaena (Euglenaria anabaena).